A 482-amino-acid polypeptide reads, in one-letter code: Variant surface glycoprotein ANTAT 1.1C (482 aa).

The signal sequence occupies residues 1–8; it reads LHPQQALA. Cystine bridges form between Cys24–Cys151 and Cys133–Cys188. A glycan (N-linked (GlcNAc...) asparagine) is linked at Asn92. N-linked (GlcNAc...) asparagine glycosylation is found at Asn398 and Asn411. A lipid anchor (GPI-anchor amidated aspartate) is attached at Asp459. The propeptide at 460–482 is removed in mature form; that stretch reads SSILVTKKFALSLVSAAFASLLF.

The protein resides in the cell membrane. In terms of biological role, VSG forms a coat on the surface of the parasite. The trypanosome evades the immune response of the host by expressing a series of antigenically distinct VSGs from an estimated 1000 VSG genes. In Trypanosoma brucei brucei, this protein is Variant surface glycoprotein ANTAT 1.1C.